Reading from the N-terminus, the 166-residue chain is uncharacterized protein (166 aa).

A2 carries the N-acetylalanine modification.

Homodimer.

This is an uncharacterized protein from Arabidopsis thaliana (Mouse-ear cress).